We begin with the raw amino-acid sequence, 310 residues long: GPN-loop GTPase 2 (310 aa).

Alanine 2 bears the N-acetylalanine mark. 19 to 24 (GSGKTT) lines the GTP pocket. The Gly-Pro-Asn (GPN)-loop; involved in dimer interface signature appears at 76-78 (GPN). Residue 178–181 (SKMD) participates in GTP binding.

This sequence belongs to the GPN-loop GTPase family. In terms of assembly, heterodimers with GPN1 or GPN3. Binds to RNA polymerase II (RNAPII).

Small GTPase required for proper localization of RNA polymerase II and III (RNAPII and RNAPIII). May act at an RNAP assembly step prior to nuclear import. The polypeptide is GPN-loop GTPase 2 (Sus scrofa (Pig)).